A 351-amino-acid chain; its full sequence is Cytosolic sulfotransferase 11 (351 aa).

Residue 98 to 103 coordinates 3'-phosphoadenylyl sulfate; that stretch reads KGGTTW. The active-site Proton acceptor is histidine 163. 3'-phosphoadenylyl sulfate contacts are provided by residues arginine 184, serine 192, tyrosine 250, and 316–318; that span reads RKG.

It belongs to the sulfotransferase 1 family.

It is found in the cytoplasm. Sulfotransferase that utilizes 3'-phospho-5'-adenylyl sulfate (PAPS) as sulfonate donor. This is Cytosolic sulfotransferase 11 (SOT11) from Arabidopsis thaliana (Mouse-ear cress).